The sequence spans 316 residues: 4-hydroxy-3-methylbut-2-enyl diphosphate reductase (316 aa).

[4Fe-4S] cluster is bound at residue cysteine 12. Positions 41 and 74 each coordinate (2E)-4-hydroxy-3-methylbut-2-enyl diphosphate. Residues histidine 41 and histidine 74 each contribute to the dimethylallyl diphosphate site. Histidine 41 and histidine 74 together coordinate isopentenyl diphosphate. Cysteine 96 is a [4Fe-4S] cluster binding site. A (2E)-4-hydroxy-3-methylbut-2-enyl diphosphate-binding site is contributed by histidine 124. Residue histidine 124 participates in dimethylallyl diphosphate binding. Histidine 124 contributes to the isopentenyl diphosphate binding site. Glutamate 126 serves as the catalytic Proton donor. Threonine 167 provides a ligand contact to (2E)-4-hydroxy-3-methylbut-2-enyl diphosphate. Cysteine 197 is a binding site for [4Fe-4S] cluster. 4 residues coordinate (2E)-4-hydroxy-3-methylbut-2-enyl diphosphate: serine 225, serine 226, asparagine 227, and serine 269. Dimethylallyl diphosphate contacts are provided by serine 225, serine 226, asparagine 227, and serine 269. Serine 225, serine 226, asparagine 227, and serine 269 together coordinate isopentenyl diphosphate.

It belongs to the IspH family. As to quaternary structure, homodimer. [4Fe-4S] cluster serves as cofactor.

It carries out the reaction isopentenyl diphosphate + 2 oxidized [2Fe-2S]-[ferredoxin] + H2O = (2E)-4-hydroxy-3-methylbut-2-enyl diphosphate + 2 reduced [2Fe-2S]-[ferredoxin] + 2 H(+). It catalyses the reaction dimethylallyl diphosphate + 2 oxidized [2Fe-2S]-[ferredoxin] + H2O = (2E)-4-hydroxy-3-methylbut-2-enyl diphosphate + 2 reduced [2Fe-2S]-[ferredoxin] + 2 H(+). It participates in isoprenoid biosynthesis; dimethylallyl diphosphate biosynthesis; dimethylallyl diphosphate from (2E)-4-hydroxy-3-methylbutenyl diphosphate: step 1/1. It functions in the pathway isoprenoid biosynthesis; isopentenyl diphosphate biosynthesis via DXP pathway; isopentenyl diphosphate from 1-deoxy-D-xylulose 5-phosphate: step 6/6. Catalyzes the conversion of 1-hydroxy-2-methyl-2-(E)-butenyl 4-diphosphate (HMBPP) into a mixture of isopentenyl diphosphate (IPP) and dimethylallyl diphosphate (DMAPP). Acts in the terminal step of the DOXP/MEP pathway for isoprenoid precursor biosynthesis. This chain is 4-hydroxy-3-methylbut-2-enyl diphosphate reductase, found in Salmonella typhi.